Reading from the N-terminus, the 364-residue chain is Mannose-1-phosphate guanylyltransferase catalytic subunit beta (364 aa).

The interval 2–220 is substrate-binding domain; sequence KALILVGGYG…PGFWMDVGQP (219 aa). Aspartate 109 lines the GDP-alpha-D-mannose pocket. Aspartate 109 lines the Mg(2+) pocket. Lysine 160 is an active-site residue. Residue aspartate 216 coordinates GDP-alpha-D-mannose. Aspartate 216 lines the Mg(2+) pocket. The segment at 243 to 364 is hexapeptide repeat domain; the sequence is ATGSNIHGTA…VNVPSKDIIM (122 aa).

It belongs to the transferase hexapeptide repeat family. In terms of assembly, component of the GMPPA-GMPPB mannose-1-phosphate guanylyltransferase complex composed of 4 GMPPA subunits and 8 tag-335/GMPPB subunits; the complex is organized into three layers, a central layer made up of 2 GMPPA dimers sandwiched between two layers each made up of 2 tag-335/GMPPB dimers. Catalytic activity of tag-335/GMPPB is reduced when part of the complex and binding of GDP-alpha-D-Mannose by GMPPA induces allosteric feedback inhibition of tag-335/GMPPB. Mg(2+) serves as cofactor.

The catalysed reaction is alpha-D-mannose 1-phosphate + GTP + H(+) = GDP-alpha-D-mannose + diphosphate. Its pathway is nucleotide-sugar biosynthesis; GDP-alpha-D-mannose biosynthesis; GDP-alpha-D-mannose from alpha-D-mannose 1-phosphate (GTP route): step 1/1. With respect to regulation, enzyme activity is reduced by incorporation into the GMPPA-GMPPB mannose-1-phosphate guanylyltransferase complex. Allosterically inhibited, when part of the GMPPA-GMPPB complex, by GDP-alpha-D-mannose binding to GMPPA. Its function is as follows. Catalytic subunit of the GMPPA-GMPPB mannose-1-phosphate guanylyltransferase complex. Catalyzes the formation of GDP-mannose, an essential precursor of glycan moieties of glycoproteins and glycolipids. Can catalyze the reverse reaction in vitro. Together with GMPPA regulates GDP-alpha-D-mannose levels. The chain is Mannose-1-phosphate guanylyltransferase catalytic subunit beta from Caenorhabditis briggsae.